The sequence spans 336 residues: Cytosolic 5'-nucleotidase 3A (336 aa).

Residue Asp-88 is the Nucleophile of the active site. Mg(2+) is bound by residues Asp-88 and Asp-90. Asp-90 serves as the catalytic Proton donor. A CMP-binding site is contributed by Glu-135. N(7)-methyl-GMP-binding residues include Glu-135 and Ser-156. Substrate contacts are provided by residues 203 to 204 (SA) and Lys-252. A Mg(2+)-binding site is contributed by Asp-277. Position 278 is a phosphoserine (Ser-278).

This sequence belongs to the pyrimidine 5'-nucleotidase family. Monomer. In terms of tissue distribution, isoforms 1, 3 and 4 are expressed in reticulocytes. Isoform 4 is hardly detectable in bone marrow and fetal liver.

The protein localises to the cytoplasm. It localises to the endoplasmic reticulum. The catalysed reaction is N(7)-methyl-GMP + H2O = N(7)-methylguanosine + phosphate. The enzyme catalyses CMP + H2O = cytidine + phosphate. It carries out the reaction a ribonucleoside 5'-phosphate + H2O = a ribonucleoside + phosphate. Nucleotidase which shows specific activity towards cytidine monophosphate (CMP) and 7-methylguanosine monophosphate (m(7)GMP). CMP seems to be the preferred substrate. This Homo sapiens (Human) protein is Cytosolic 5'-nucleotidase 3A (NT5C3A).